The sequence spans 863 residues: Ubiquitin carboxyl-terminal hydrolase 13 (863 aa).

At Ser-114 the chain carries Phosphoserine; by AURKB. The residue at position 122 (Thr-122) is a Phosphothreonine. The UBP-type; degenerate zinc finger occupies 187–295 (PVSKYANNLT…KHLAHFGIDM (109 aa)). Residues Cys-211, Cys-214, Cys-231, and His-244 each coordinate Zn(2+). Residue Lys-311 forms a Glycyl lysine isopeptide (Lys-Gly) (interchain with G-Cter in SUMO2) linkage. The USP domain maps to 336–861 (TGLKNLGNSC…LGYMYFYRRI (526 aa)). Cys-345 (nucleophile) is an active-site residue. Residue Lys-405 forms a Glycyl lysine isopeptide (Lys-Gly) (interchain with G-Cter in SUMO2) linkage. UBA domains follow at residues 652–693 (DIDE…IIVH) and 727–767 (QPPE…IFSH). His-823 serves as the catalytic Proton acceptor.

Belongs to the peptidase C19 family. Interacts with UFD1. Interacts (via UBA domains) with SIAH2 (when ubiquitinated). Interacts with BAG6; the interaction is direct and may mediate UBL4A deubiquitination. Interacts (via UBA 2 domain) with AMFR; the interaction is direct. Interacts with UBL4A; may be indirect via BAG6. Interacts with NEDD4. Post-translationally, phosphorylated by AURKB at Ser-114; leading to stabilization of cell cycle proteins such as SKP2 and AURKB, but not MCL1. In terms of tissue distribution, highly expressed in ovary and testes.

It localises to the cytoplasm. It catalyses the reaction Thiol-dependent hydrolysis of ester, thioester, amide, peptide and isopeptide bonds formed by the C-terminal Gly of ubiquitin (a 76-residue protein attached to proteins as an intracellular targeting signal).. Its activity is regulated as follows. Specifically inhibited by spautin-1 (specific and potent autophagy inhibitor-1), a derivative of MBCQ that binds to USP13 and inhibits deubiquitinase activity. Regulated by PIK3C3/VPS34-containing complexes. The weak deubiquitinase activity in vitro suggests the existence of some mechanism that activates the enzyme. Its function is as follows. Deubiquitinase that mediates deubiquitination of target proteins such as BECN1, MITF, SKP2 and USP10 and is involved in various processes such as autophagy, endoplasmic reticulum-associated degradation (ERAD), cell cycle progression or DNA damage response. Component of a regulatory loop that controls autophagy and p53/TP53 levels: mediates deubiquitination of BECN1, a key regulator of autophagy, leading to stabilize the PIK3C3/VPS34-containing complexes. Alternatively, forms with NEDD4 a deubiquitination complex, which subsequently stabilizes VPS34 to promote autophagy. Also deubiquitinates USP10, an essential regulator of p53/TP53 stability. In turn, PIK3C3/VPS34-containing complexes regulate USP13 stability, suggesting the existence of a regulatory system by which PIK3C3/VPS34-containing complexes regulate p53/TP53 protein levels via USP10 and USP13. Recruited by nuclear UFD1 and mediates deubiquitination of SKP2, thereby regulating endoplasmic reticulum-associated degradation (ERAD). Also regulates ERAD through the deubiquitination of UBL4A a component of the BAG6/BAT3 complex. Mediates stabilization of SIAH2 independently of deubiquitinase activity: binds ubiquitinated SIAH2 and acts by impairing SIAH2 autoubiquitination. Regulates the cell cycle progression by stabilizing cell cycle proteins such as SKP2 and AURKB. In addition, plays an important role in maintaining genomic stability and in DNA replication checkpoint activation via regulation of RAP80 and TOPBP1. Deubiquitinates the multifunctional protein HMGB1 and subsequently drives its nucleocytoplasmic localization and its secretion. Positively regulates type I and type II interferon signalings by deubiquitinating STAT1 but negatively regulates antiviral response by deubiquitinating STING1. This Homo sapiens (Human) protein is Ubiquitin carboxyl-terminal hydrolase 13 (USP13).